Here is a 149-residue protein sequence, read N- to C-terminus: Lipoprotein signal peptidase (149 aa).

A run of 2 helical transmembrane segments spans residues 58 to 78 (WFFI…LIRL) and 85 to 105 (ASLA…DRAM). Active-site residues include D111 and D127. Residues 122-142 (IFNVADMAITIGVGILLLDVF) form a helical membrane-spanning segment.

This sequence belongs to the peptidase A8 family.

It localises to the cell membrane. It carries out the reaction Release of signal peptides from bacterial membrane prolipoproteins. Hydrolyzes -Xaa-Yaa-Zaa-|-(S,diacylglyceryl)Cys-, in which Xaa is hydrophobic (preferably Leu), and Yaa (Ala or Ser) and Zaa (Gly or Ala) have small, neutral side chains.. It functions in the pathway protein modification; lipoprotein biosynthesis (signal peptide cleavage). Its function is as follows. This protein specifically catalyzes the removal of signal peptides from prolipoproteins. The sequence is that of Lipoprotein signal peptidase from Brevibacillus brevis (strain 47 / JCM 6285 / NBRC 100599).